We begin with the raw amino-acid sequence, 509 residues long: MEEIQRYLQLERSQQHDFLYPLIFQEYIYTFAHDRGFGRSILSENPGYDNKYSLLIVKRLITRMYQQNHLIISPNDSNQNQFLGRNKNLYSQIISEGFAFIVEIPFSLRLISCLEGKNKKIIKSQNLRSILSIFPFLEDNFSHLNLVLDILIPHPVHGEILVQTLRYWVKDASSLHLLRFFLNKNWNSLITPKKASSSFLKRNQRLFLFLYNSHVCEYESVFVFLRNQSSHLRSTPFGVFLERIYFYGKIERLVNVFVKVKDFQANLWLVKEPCIHYIRYQRKAILASKGTSLFMNKWKCYLITFWQWHFSLWFYPRRIYINQLSNHSFEFLGYQSSLRMNPSVVRSQILENSFLINNAIKKVDTFIPIIPLIVSLAKAKFCNVXGHPISKPVRADLSDSNIIDRFGCICRNFSHYHSGSSKKKSLYRIKYILRLSCARTLARKHKTTVRTFLKRLGSELLEEFLLSEEDVLFLTFPKASSSLQGVYRNRIWYLDIISINDLADHKSKL.

This sequence belongs to the intron maturase 2 family. MatK subfamily.

Its subcellular location is the plastid. Usually encoded in the trnK tRNA gene intron. Probably assists in splicing its own and other chloroplast group II introns. This chain is Maturase K, found in Castilleja linariifolia (Wyoming Indian paintbrush).